The chain runs to 308 residues: uncharacterized protein (308 aa).

The N-terminal stretch at 1 to 28 is a signal peptide; sequence MILMKKFEIILFLFIAVLIFVFGYFVGA.

This is an uncharacterized protein from Methanocaldococcus jannaschii (strain ATCC 43067 / DSM 2661 / JAL-1 / JCM 10045 / NBRC 100440) (Methanococcus jannaschii).